Reading from the N-terminus, the 109-residue chain is Nucleoid-associated protein VV2410 (109 aa).

Residues 1–22 (MFGKGGMGNLMKQAQQMQERMQ) are disordered.

The protein belongs to the YbaB/EbfC family. Homodimer.

The protein localises to the cytoplasm. It localises to the nucleoid. In terms of biological role, binds to DNA and alters its conformation. May be involved in regulation of gene expression, nucleoid organization and DNA protection. This is Nucleoid-associated protein VV2410 from Vibrio vulnificus (strain YJ016).